The following is a 745-amino-acid chain: Protein transport protein SEC23 D (745 aa).

Zn(2+) contacts are provided by Cys53, Cys56, Cys73, and Cys76. A zinc finger-like region spans residues Cys53 to Cys76.

Belongs to the SEC23/SEC24 family. SEC24 subfamily. As to quaternary structure, component of the coat protein complex II (COPII), composed of at least five proteins: the Sec23/24 complex, the Sec13/31 complex and Sar1. As to expression, mostly expressed in closed floral bud, pollen and flowers, and, to a lower extent, in mature siliques, roots and leaf primordia.

The protein localises to the cytoplasmic vesicle. The protein resides in the COPII-coated vesicle membrane. It is found in the endoplasmic reticulum membrane. Its subcellular location is the membrane. In terms of biological role, component of the coat protein complex II (COPII) which promotes the formation of transport vesicles from the endoplasmic reticulum (ER). The coat has two main functions, the physical deformation of the endoplasmic reticulum membrane into vesicles and the selection of cargo molecules. May contribute to COPII-coated vesicles formation and ER-Golgi vesicle transport. Together with SEC23A, essential for pollen wall development and exine patterning, probably by regulating endoplasmic reticulum (ER) export of lipids and proteins (e.g. sporopollenin) necessary for pollen wall formation. Also involved in plastid physiology in anther tapetal cells. This chain is Protein transport protein SEC23 D, found in Arabidopsis thaliana (Mouse-ear cress).